A 505-amino-acid polypeptide reads, in one-letter code: ATP synthase subunit beta, mitochondrial (505 aa).

The N-terminal 31 residues, methionine 1–lysine 31, are a transit peptide targeting the mitochondrion. Position 183–190 (glycine 183–threonine 190) interacts with ATP.

Belongs to the ATPase alpha/beta chains family. As to quaternary structure, F-type ATPases have 2 components, CF(1) - the catalytic core - and CF(0) - the membrane proton channel. CF(1) has five subunits: alpha(3), beta(3), gamma(1), delta(1), epsilon(1). CF(0) has three main subunits: a, b and c.

It is found in the mitochondrion. Its subcellular location is the mitochondrion inner membrane. It carries out the reaction ATP + H2O + 4 H(+)(in) = ADP + phosphate + 5 H(+)(out). Functionally, mitochondrial membrane ATP synthase (F(1)F(0) ATP synthase or Complex V) produces ATP from ADP in the presence of a proton gradient across the membrane which is generated by electron transport complexes of the respiratory chain. F-type ATPases consist of two structural domains, F(1) - containing the extramembraneous catalytic core, and F(0) - containing the membrane proton channel, linked together by a central stalk and a peripheral stalk. During catalysis, ATP synthesis in the catalytic domain of F(1) is coupled via a rotary mechanism of the central stalk subunits to proton translocation. Subunits alpha and beta form the catalytic core in F(1). Rotation of the central stalk against the surrounding alpha(3)beta(3) subunits leads to hydrolysis of ATP in three separate catalytic sites on the beta subunits. This Drosophila melanogaster (Fruit fly) protein is ATP synthase subunit beta, mitochondrial.